We begin with the raw amino-acid sequence, 72 residues long: Translation initiation factor IF-1 (72 aa).

In terms of domain architecture, S1-like spans 1 to 72 (MAKEELLEMR…TKGRITYRFK (72 aa)).

This sequence belongs to the IF-1 family. Component of the 30S ribosomal translation pre-initiation complex which assembles on the 30S ribosome in the order IF-2 and IF-3, IF-1 and N-formylmethionyl-tRNA(fMet); mRNA recruitment can occur at any time during PIC assembly.

The protein localises to the cytoplasm. Functionally, one of the essential components for the initiation of protein synthesis. Stabilizes the binding of IF-2 and IF-3 on the 30S subunit to which N-formylmethionyl-tRNA(fMet) subsequently binds. Helps modulate mRNA selection, yielding the 30S pre-initiation complex (PIC). Upon addition of the 50S ribosomal subunit IF-1, IF-2 and IF-3 are released leaving the mature 70S translation initiation complex. This is Translation initiation factor IF-1 from Sphingopyxis alaskensis (strain DSM 13593 / LMG 18877 / RB2256) (Sphingomonas alaskensis).